A 539-amino-acid chain; its full sequence is MGVVAKNFPIPDLHRVRRILLSVSDKTGVVAFAQALHATYSVELISTGGTAKTLIAAGLPVKDVSEVTGFPEIMDGRVKTLHPLIHGALLGIREDPSHREAMEKNSIHGIDLLVVNLYPFEETIQSGADGKTILENIDIGGPAMIRAAAKNYAYTGVVTAINDYDSILAELKQHNGCLSLSMRHQLAMRAYAHTAAYDTAIAAWFARDLKIETPSWQSFSGHLESVMRYGENPHQQAAFYRNNEKRFGVATAKLLQGKALSYNNLNDTDAAFELVAEFDPQKTAAVALIKHANPCGVAEGENLKDAYLKALMCDNVSAFGGIVALNQTLDEECAEEIVKIFTEVIIAPDATMAAREIIAKKKNLRLLITGGIPNPRCGGLLAKTLAGGILVQSRDNVVIDDLKLQVVTKRTPTQDEMRDLQFAFRVAKHVKSNAIVYAKNSATVGIGAGQMSRIDSAKIAASKAAESARRAGLTETLTKGSVVASDAFFPFADGLLAAAAAGATAVIQPGGSMRDEEVITAADEQGLAMVFTGIRHFRH.

Positions 8–159 constitute an MGS-like domain; sequence FPIPDLHRVR…KNYAYTGVVT (152 aa).

This sequence belongs to the PurH family.

The catalysed reaction is (6R)-10-formyltetrahydrofolate + 5-amino-1-(5-phospho-beta-D-ribosyl)imidazole-4-carboxamide = 5-formamido-1-(5-phospho-D-ribosyl)imidazole-4-carboxamide + (6S)-5,6,7,8-tetrahydrofolate. It carries out the reaction IMP + H2O = 5-formamido-1-(5-phospho-D-ribosyl)imidazole-4-carboxamide. The protein operates within purine metabolism; IMP biosynthesis via de novo pathway; 5-formamido-1-(5-phospho-D-ribosyl)imidazole-4-carboxamide from 5-amino-1-(5-phospho-D-ribosyl)imidazole-4-carboxamide (10-formyl THF route): step 1/1. It functions in the pathway purine metabolism; IMP biosynthesis via de novo pathway; IMP from 5-formamido-1-(5-phospho-D-ribosyl)imidazole-4-carboxamide: step 1/1. The protein is Bifunctional purine biosynthesis protein PurH of Bartonella tribocorum (strain CIP 105476 / IBS 506).